A 142-amino-acid chain; its full sequence is Large ribosomal subunit protein uL11 (142 aa).

Belongs to the universal ribosomal protein uL11 family. Part of the ribosomal stalk of the 50S ribosomal subunit. Interacts with L10 and the large rRNA to form the base of the stalk. L10 forms an elongated spine to which L12 dimers bind in a sequential fashion forming a multimeric L10(L12)X complex. In terms of processing, one or more lysine residues are methylated.

Functionally, forms part of the ribosomal stalk which helps the ribosome interact with GTP-bound translation factors. In Mycoplasma capricolum subsp. capricolum (strain California kid / ATCC 27343 / NCTC 10154), this protein is Large ribosomal subunit protein uL11.